We begin with the raw amino-acid sequence, 234 residues long: Cell fusion protein dni1 (234 aa).

The first 32 residues, 1-32 (MLFLHSVVQGTGTLCTLAAWILLALVMTGCQS), serve as a signal peptide directing secretion. Over 33–96 (STTSKFQLFS…RSKFLINEVH (64 aa)) the chain is Extracellular. A helical membrane pass occupies residues 97–117 (PWMIVFSFCVCGVSFLMGVVS). Over 118 to 132 (SLPLIGRLEFLRNIR) the chain is Cytoplasmic. The helical transmembrane segment at 133–153 (ISLSFFSFFSILVTALFAHVA) threads the bilayer. The Extracellular segment spans residues 154 to 178 (VSSFVMAVGNGTQNRVTASLGKKAM). Residues 179–199 (IFLWCSMGLVTLTGITDSIIL) form a helical membrane-spanning segment. Topologically, residues 200-234 (LVTSRTKKIRKTILEKSKVLTPSSSFSSKSSTTKY) are cytoplasmic.

Belongs to the SUR7 family.

It localises to the cell membrane. The protein resides in the cell tip. Cell membrane protein which plays a relevant role in coordinating membrane organization and cell wall remodeling during mating. In Schizosaccharomyces pombe (strain 972 / ATCC 24843) (Fission yeast), this protein is Cell fusion protein dni1 (dni1).